The sequence spans 193 residues: 3-isopropylmalate dehydratase small subunit (193 aa).

This sequence belongs to the LeuD family. LeuD type 1 subfamily. As to quaternary structure, heterodimer of LeuC and LeuD.

The catalysed reaction is (2R,3S)-3-isopropylmalate = (2S)-2-isopropylmalate. It functions in the pathway amino-acid biosynthesis; L-leucine biosynthesis; L-leucine from 3-methyl-2-oxobutanoate: step 2/4. Catalyzes the isomerization between 2-isopropylmalate and 3-isopropylmalate, via the formation of 2-isopropylmaleate. The protein is 3-isopropylmalate dehydratase small subunit of Bacillus thuringiensis subsp. konkukian (strain 97-27).